The following is a 636-amino-acid chain: 1-deoxy-D-xylulose-5-phosphate synthase (636 aa).

Thiamine diphosphate-binding positions include His74 and 115 to 117 (GHA). Asp146 is a Mg(2+) binding site. Thiamine diphosphate contacts are provided by residues 147 to 148 (GA), Asn175, Tyr285, and Glu368. Asn175 serves as a coordination point for Mg(2+).

The protein belongs to the transketolase family. DXPS subfamily. Homodimer. The cofactor is Mg(2+). It depends on thiamine diphosphate as a cofactor.

The catalysed reaction is D-glyceraldehyde 3-phosphate + pyruvate + H(+) = 1-deoxy-D-xylulose 5-phosphate + CO2. Its pathway is metabolic intermediate biosynthesis; 1-deoxy-D-xylulose 5-phosphate biosynthesis; 1-deoxy-D-xylulose 5-phosphate from D-glyceraldehyde 3-phosphate and pyruvate: step 1/1. Its function is as follows. Catalyzes the acyloin condensation reaction between C atoms 2 and 3 of pyruvate and glyceraldehyde 3-phosphate to yield 1-deoxy-D-xylulose-5-phosphate (DXP). This is 1-deoxy-D-xylulose-5-phosphate synthase from Anaeromyxobacter sp. (strain K).